The following is a 256-amino-acid chain: Floral homeotic protein APETALA 1 (256 aa).

In terms of domain architecture, MADS-box spans 1–61 (MGRGRVQLKR…GKLFEYSTDS (61 aa)). The 91-residue stretch at 88-178 (NTNWSMEYNR…FKQIKEREKI (91 aa)) folds into the K-box domain.

Homodimer capable of binding to CArG-box sequences.

It is found in the nucleus. Functionally, transcription factor that promotes early floral meristem identity in synergy with LEAFY. Displays a redundant function with CAULIFLOWER in the up-regulation of LEAFY. Required subsequently for the transition of an inflorescence meristem into a floral meristem, and for the normal development of sepals and petals in flowers. Regulates positively B class homeotic proteins. In Citrus sinensis (Sweet orange), this protein is Floral homeotic protein APETALA 1 (AP1).